The sequence spans 293 residues: Ribonuclease HII (293 aa).

The region spanning Thr-81–Gly-271 is the RNase H type-2 domain. Residues Asp-87, Glu-88, and Asp-180 each contribute to the a divalent metal cation site. Positions Pro-273–Ser-293 are disordered.

This sequence belongs to the RNase HII family. Mn(2+) is required as a cofactor. Requires Mg(2+) as cofactor.

Its subcellular location is the cytoplasm. The enzyme catalyses Endonucleolytic cleavage to 5'-phosphomonoester.. Functionally, endonuclease that specifically degrades the RNA of RNA-DNA hybrids. This chain is Ribonuclease HII, found in Myxococcus xanthus (strain DK1622).